Here is a 258-residue protein sequence, read N- to C-terminus: Imidazole glycerol phosphate synthase subunit HisF (258 aa).

Catalysis depends on residues Asp-11 and Asp-130.

The protein belongs to the HisA/HisF family. In terms of assembly, heterodimer of HisH and HisF.

The protein resides in the cytoplasm. The catalysed reaction is 5-[(5-phospho-1-deoxy-D-ribulos-1-ylimino)methylamino]-1-(5-phospho-beta-D-ribosyl)imidazole-4-carboxamide + L-glutamine = D-erythro-1-(imidazol-4-yl)glycerol 3-phosphate + 5-amino-1-(5-phospho-beta-D-ribosyl)imidazole-4-carboxamide + L-glutamate + H(+). It functions in the pathway amino-acid biosynthesis; L-histidine biosynthesis; L-histidine from 5-phospho-alpha-D-ribose 1-diphosphate: step 5/9. Its function is as follows. IGPS catalyzes the conversion of PRFAR and glutamine to IGP, AICAR and glutamate. The HisF subunit catalyzes the cyclization activity that produces IGP and AICAR from PRFAR using the ammonia provided by the HisH subunit. This chain is Imidazole glycerol phosphate synthase subunit HisF, found in Gluconacetobacter diazotrophicus (strain ATCC 49037 / DSM 5601 / CCUG 37298 / CIP 103539 / LMG 7603 / PAl5).